A 1503-amino-acid polypeptide reads, in one-letter code: Dynein axonemal assembly factor 1 homolog (1503 aa).

6 LRR repeats span residues 34–56, 57–78, 79–100, 101–122, 125–146, and 150–171; these read RLND…EEYT, ELKC…EKLG, KLKC…DPCR, ELDT…GTNI, VLNT…SDLI, and TLSV…KIFE. One can recognise an LRRCT domain in the interval 185-223; it reads PVVSRLPQYRKTLILACKELTYLDSRPVFPRDRACAEAW. Disordered stretches follow at residues 249–280, 305–328, 956–1033, and 1295–1315; these read SINC…DDTC, EQPI…TSSQ, DSGD…DHDE, and STNN…STSE. Acidic residues predominate over residues 973-985; it reads TESEDYDTAEDEY. The segment covering 1014–1031 has biased composition (basic and acidic residues); sequence QKQDKPDTVEEVGKKNDH. Residues 1303-1314 show a composition bias toward low complexity; sequence TKKTLPTKTSTS.

It belongs to the DNAAF1 family.

Its subcellular location is the cell projection. The protein resides in the cilium. Functionally, cilium-specific protein required for cilia structures. The chain is Dynein axonemal assembly factor 1 homolog (dtr) from Drosophila erecta (Fruit fly).